We begin with the raw amino-acid sequence, 156 residues long: ATP synthase subunit b (156 aa).

The helical transmembrane segment at leucine 7–leucine 29 threads the bilayer.

Belongs to the ATPase B chain family. In terms of assembly, F-type ATPases have 2 components, F(1) - the catalytic core - and F(0) - the membrane proton channel. F(1) has five subunits: alpha(3), beta(3), gamma(1), delta(1), epsilon(1). F(0) has three main subunits: a(1), b(2) and c(10-14). The alpha and beta chains form an alternating ring which encloses part of the gamma chain. F(1) is attached to F(0) by a central stalk formed by the gamma and epsilon chains, while a peripheral stalk is formed by the delta and b chains.

It is found in the cell inner membrane. Its function is as follows. F(1)F(0) ATP synthase produces ATP from ADP in the presence of a proton or sodium gradient. F-type ATPases consist of two structural domains, F(1) containing the extramembraneous catalytic core and F(0) containing the membrane proton channel, linked together by a central stalk and a peripheral stalk. During catalysis, ATP synthesis in the catalytic domain of F(1) is coupled via a rotary mechanism of the central stalk subunits to proton translocation. In terms of biological role, component of the F(0) channel, it forms part of the peripheral stalk, linking F(1) to F(0). The sequence is that of ATP synthase subunit b from Burkholderia lata (strain ATCC 17760 / DSM 23089 / LMG 22485 / NCIMB 9086 / R18194 / 383).